We begin with the raw amino-acid sequence, 425 residues long: MHITLIGVHQRNTPVTVRERLAFSLRELPDALLALRRYVEEGIILSTCNRVEVCAVTHDSVGGDAALKSFLAEQRGVDQAVFVPSLYIYHNEAVVRHLYRLAAGLDSMVLGEDQIVGQIKEALAIAHASGAIGPVLHRVLHGALAAGKRARTHTGIASGHVSVVSVAIDALRQHADLLKQGRALVIGAGHMAELTLKHLIAEGCSAITVINRTETRASALAQRYGVAWRPWGDLSDALAMSDMVVSCTSAPGIVVSWQMVERAAVGRSVPLLLFDLAVPRDIDQRVVEIPGVHLYDVDALEPICVTNRAMRAAEAQRAEAIIDGEVAKFMEWWVAQQAVPTIRALRERAEAIRDAEIRRALARCPELSPQQRETVVALSTAIINKLLHEPIVALRDPEAGSELVSAVRRLFNIDDATVHPSAKVT.

Substrate contacts are provided by residues Thr-47–Arg-50, Ser-107, Glu-112–Gln-114, and Gln-118. Cys-48 acts as the Nucleophile in catalysis. Gly-187–Ala-192 is a binding site for NADP(+).

It belongs to the glutamyl-tRNA reductase family. Homodimer.

It catalyses the reaction (S)-4-amino-5-oxopentanoate + tRNA(Glu) + NADP(+) = L-glutamyl-tRNA(Glu) + NADPH + H(+). Its pathway is porphyrin-containing compound metabolism; protoporphyrin-IX biosynthesis; 5-aminolevulinate from L-glutamyl-tRNA(Glu): step 1/2. It participates in porphyrin-containing compound metabolism; chlorophyll biosynthesis. Catalyzes the NADPH-dependent reduction of glutamyl-tRNA(Glu) to glutamate 1-semialdehyde (GSA). In Roseiflexus castenholzii (strain DSM 13941 / HLO8), this protein is Glutamyl-tRNA reductase.